Here is a 61-residue protein sequence, read N- to C-terminus: Large ribosomal subunit protein bL32 (61 aa).

It belongs to the bacterial ribosomal protein bL32 family.

The chain is Large ribosomal subunit protein bL32 from Syntrophus aciditrophicus (strain SB).